The following is a 425-amino-acid chain: Trigger factor (425 aa).

The PPIase FKBP-type domain occupies 158 to 231 (GDLVRVNMEV…VEEVYKRTLP (74 aa)).

It belongs to the FKBP-type PPIase family. Tig subfamily.

Its subcellular location is the cytoplasm. The catalysed reaction is [protein]-peptidylproline (omega=180) = [protein]-peptidylproline (omega=0). Its function is as follows. Involved in protein export. Acts as a chaperone by maintaining the newly synthesized protein in an open conformation. Functions as a peptidyl-prolyl cis-trans isomerase. This chain is Trigger factor (tig), found in Thermotoga maritima (strain ATCC 43589 / DSM 3109 / JCM 10099 / NBRC 100826 / MSB8).